We begin with the raw amino-acid sequence, 160 residues long: Cyclic pyranopterin monophosphate synthase (160 aa).

Substrate contacts are provided by residues 74–76 (LSH) and 112–113 (ME). Asp-127 is an active-site residue.

Belongs to the MoaC family. In terms of assembly, homohexamer; trimer of dimers.

The catalysed reaction is (8S)-3',8-cyclo-7,8-dihydroguanosine 5'-triphosphate = cyclic pyranopterin phosphate + diphosphate. It functions in the pathway cofactor biosynthesis; molybdopterin biosynthesis. In terms of biological role, catalyzes the conversion of (8S)-3',8-cyclo-7,8-dihydroguanosine 5'-triphosphate to cyclic pyranopterin monophosphate (cPMP). The chain is Cyclic pyranopterin monophosphate synthase from Geobacter metallireducens (strain ATCC 53774 / DSM 7210 / GS-15).